The following is a 534-amino-acid chain: uncharacterized protein (534 aa).

Positions 1–22 (MGLRLLFSLICVFCISNIFTQA) are cleaved as a signal peptide. Asn-31 is a glycosylation site (N-linked (GlcNAc...) asparagine). 2 disordered regions span residues 70–145 (PTYY…SSVS) and 176–418 (SSLS…SSAP). An N-linked (GlcNAc...) asparagine glycan is attached at Asn-426.

Its subcellular location is the endoplasmic reticulum. The protein localises to the cell membrane. This is an uncharacterized protein from Schizosaccharomyces pombe (strain 972 / ATCC 24843) (Fission yeast).